The primary structure comprises 186 residues: Photosystem I assembly protein Ycf4 (186 aa).

The next 2 membrane-spanning stretches (helical) occupy residues 22–42 and 57–77; these read FCWA…GTSS and IIFF…LFIS.

Belongs to the Ycf4 family.

The protein resides in the plastid. The protein localises to the chloroplast thylakoid membrane. Seems to be required for the assembly of the photosystem I complex. In Vitis vinifera (Grape), this protein is Photosystem I assembly protein Ycf4.